Here is a 316-residue protein sequence, read N- to C-terminus: Ribosomal RNA small subunit methyltransferase H (316 aa).

S-adenosyl-L-methionine-binding positions include 35–37 (AGH), aspartate 55, phenylalanine 84, aspartate 105, and glutamine 112.

This sequence belongs to the methyltransferase superfamily. RsmH family.

The protein resides in the cytoplasm. It carries out the reaction cytidine(1402) in 16S rRNA + S-adenosyl-L-methionine = N(4)-methylcytidine(1402) in 16S rRNA + S-adenosyl-L-homocysteine + H(+). Functionally, specifically methylates the N4 position of cytidine in position 1402 (C1402) of 16S rRNA. This is Ribosomal RNA small subunit methyltransferase H from Streptococcus pneumoniae (strain 70585).